Consider the following 161-residue polypeptide: Blue copper protein 1a (161 aa).

The first 23 residues, 1–23, serve as a signal peptide directing secretion; that stretch reads MASSRVVLILSISMVLLSSVAIA. One can recognise a Phytocyanin domain in the interval 24–124; the sequence is TDHIVGDDKG…QMKLVITVLA (101 aa). His-64 lines the Cu cation pocket. Asn-70 carries N-linked (GlcNAc...) asparagine glycosylation. A disulfide bridge connects residues Cys-77 and Cys-111. Cys-105, His-110, and Met-116 together coordinate Cu cation. A helical membrane pass occupies residues 141-161; sequence VVSSLFGVVMAIMVAIAVIFA.

Its subcellular location is the membrane. The polypeptide is Blue copper protein 1a (Medicago truncatula (Barrel medic)).